The sequence spans 354 residues: Nicotinate-nucleotide--dimethylbenzimidazole phosphoribosyltransferase (354 aa).

The active-site Proton acceptor is E317.

Belongs to the CobT family. As to quaternary structure, homodimer.

It catalyses the reaction 5,6-dimethylbenzimidazole + nicotinate beta-D-ribonucleotide = alpha-ribazole 5'-phosphate + nicotinate + H(+). It functions in the pathway nucleoside biosynthesis; alpha-ribazole biosynthesis; alpha-ribazole from 5,6-dimethylbenzimidazole: step 1/2. Catalyzes the synthesis of alpha-ribazole-5'-phosphate from nicotinate mononucleotide (NAMN) and 5,6-dimethylbenzimidazole (DMB). The polypeptide is Nicotinate-nucleotide--dimethylbenzimidazole phosphoribosyltransferase (Salmonella arizonae (strain ATCC BAA-731 / CDC346-86 / RSK2980)).